The chain runs to 249 residues: Probable calcium-binding protein CML12 (249 aa).

Over residues methionine 1 to histidine 24 the composition is skewed to basic and acidic residues. The disordered stretch occupies residues methionine 1–glutamate 80. Residues alanine 30–valine 56 are compositionally biased toward low complexity. Basic and acidic residues predominate over residues aspartate 57 to lysine 70. EF-hand domains follow at residues glutamate 91–arginine 126, alanine 128–glycine 163, valine 171–proline 206, and isoleucine 207–aspartate 242. Residues aspartate 104, aspartate 106, aspartate 108, serine 110, glutamate 115, aspartate 141, aspartate 143, asparagine 145, threonine 147, glutamate 152, aspartate 184, aspartate 186, asparagine 188, glutamate 195, aspartate 220, aspartate 222, aspartate 224, and glutamate 231 each contribute to the Ca(2+) site.

Potential calcium sensor. The protein is Probable calcium-binding protein CML12 (CML12) of Oryza sativa subsp. japonica (Rice).